We begin with the raw amino-acid sequence, 297 residues long: Thiosulfate sulfurtransferase (297 aa).

The residue at position 14 (Lys14) is an N6-acetyllysine; alternate. Lys14 carries the post-translational modification N6-succinyllysine; alternate. The 119-residue stretch at 25-143 (LGPSLRVLDA…WLKEGHPVTS (119 aa)) folds into the Rhodanese 1 domain. O-linked (GlcNAc) serine glycosylation is present at Ser35. Position 38 is a phosphoserine (Ser38). Lys136 carries the N6-acetyllysine; alternate modification. The residue at position 136 (Lys136) is an N6-succinyllysine; alternate. Residues 144–159 (EPSRPEPAVFKATLNL) form a hinge region. Lys163 is modified (N6-acetyllysine). The 116-residue stretch at 173–288 (QSKRFQLVDS…WFRRAPPETR (116 aa)) folds into the Rhodanese 2 domain. Lys175 is modified (N6-acetyllysine; alternate). Lys175 is modified (N6-succinyllysine; alternate). Arg187 contributes to the substrate binding site. An N6-acetyllysine; alternate mark is found at Lys219 and Lys224. 2 positions are modified to N6-succinyllysine; alternate: Lys219 and Lys224. Lys236 is subject to N6-acetyllysine. Lys237 carries the post-translational modification N6-acetyllysine; alternate. Residue Lys237 is modified to N6-succinyllysine; alternate. The active-site Cysteine persulfide intermediate is the Cys248. Lys250 provides a ligand contact to substrate.

In terms of assembly, monomer. As to expression, expressed in numerous tissues.

The protein resides in the mitochondrion matrix. It carries out the reaction thiosulfate + hydrogen cyanide = thiocyanate + sulfite + 2 H(+). Together with MRPL18, acts as a mitochondrial import factor for the cytosolic 5S rRNA. Only the nascent unfolded cytoplasmic form is able to bind to the 5S rRNA. Formation of iron-sulfur complexes and cyanide detoxification. This is Thiosulfate sulfurtransferase (Tst) from Mus musculus (Mouse).